We begin with the raw amino-acid sequence, 250 residues long: MAVTMRQMLEAGVHFGHQTRFWNPKMAPFIFGHRNKIHIINLEKTLPMYNDALKYVRQLAANRGTILFVGTKRQSRDTIAEAAQRAGMPYVNARWLGGMLTNFKTLKVSIKRLKDMEAAVEAGELEKMSKKEALLFEREIAKLQKSIGGVKDMGGIPDAIFVVDVGYHKIAVTEANKLGVPVIAVVDTNHSPEGVDYVIPGNDDASKAVALYTQGVADAILEGRANAVNEVVQAVRGGDGDEFVEVNGEA.

Belongs to the universal ribosomal protein uS2 family.

The sequence is that of Small ribosomal subunit protein uS2 from Paraburkholderia phymatum (strain DSM 17167 / CIP 108236 / LMG 21445 / STM815) (Burkholderia phymatum).